We begin with the raw amino-acid sequence, 407 residues long: 4-hydroxybenzoate polyprenyltransferase, mitochondrial (407 aa).

The transit peptide at 1-20 (MAFFGLSRVSRRLLKSSVSV) directs the protein to the mitochondrion. 6 helical membrane-spanning segments follow: residues 137-157 (IGTWLLAWPCMWSIALAADPG), 162-182 (FKYMALFGCGALLLRGAGCTI), 210-230 (FQGIGFLGLQLLLGLGILLQL), 254-274 (FTFWPQAFLGLTINWGALLGW), 279-299 (GSIAPSIVLPLYLSGVCWTLV), and 330-350 (LWLTGFGTASIGFLALSGFSA).

This sequence belongs to the UbiA prenyltransferase family. Mg(2+) serves as cofactor. As to expression, expressed in flowers.

It is found in the mitochondrion inner membrane. It catalyses the reaction an all-trans-polyprenyl diphosphate + 4-hydroxybenzoate = a 4-hydroxy-3-(all-trans-polyprenyl)benzoate + diphosphate. It participates in cofactor biosynthesis; ubiquinone biosynthesis. Its function is as follows. Catalyzes the prenylation of para-hydroxybenzoate (PHB) with an all-trans polyprenyl group. Mediates the second step in the final reaction sequence of coenzyme Q (CoQ) biosynthesis, which is the condensation of the polyisoprenoid side chain with PHB, generating the first membrane-bound Q intermediate. Required for embryo development. The chain is 4-hydroxybenzoate polyprenyltransferase, mitochondrial from Arabidopsis thaliana (Mouse-ear cress).